Consider the following 182-residue polypeptide: Flagellar transcriptional regulator FlhC (182 aa).

Residues Cys-138, Cys-141, Cys-158, and Cys-161 each coordinate Zn(2+).

It belongs to the FlhC family. Heterohexamer composed of two FlhC and four FlhD subunits. Each FlhC binds a FlhD dimer, forming a heterotrimer, and a hexamer assembles by dimerization of two heterotrimers. Zn(2+) is required as a cofactor.

It is found in the cytoplasm. Functions in complex with FlhD as a master transcriptional regulator that regulates transcription of several flagellar and non-flagellar operons by binding to their promoter region. Activates expression of class 2 flagellar genes, including fliA, which is a flagellum-specific sigma factor that turns on the class 3 genes. Also regulates genes whose products function in a variety of physiological pathways. The sequence is that of Flagellar transcriptional regulator FlhC from Gallionella capsiferriformans (strain ES-2) (Gallionella ferruginea capsiferriformans (strain ES-2)).